Consider the following 157-residue polypeptide: uncharacterized protein (157 aa).

It belongs to the MG067/MG068/MG395 family.

This is an uncharacterized protein from Mycoplasma pneumoniae (strain ATCC 29342 / M129 / Subtype 1) (Mycoplasmoides pneumoniae).